The chain runs to 463 residues: Argininosuccinate lyase (463 aa).

This sequence belongs to the lyase 1 family. Argininosuccinate lyase subfamily.

The protein resides in the cytoplasm. The enzyme catalyses 2-(N(omega)-L-arginino)succinate = fumarate + L-arginine. Its pathway is amino-acid biosynthesis; L-arginine biosynthesis; L-arginine from L-ornithine and carbamoyl phosphate: step 3/3. The protein is Argininosuccinate lyase of Bacillus cereus (strain AH187).